The following is a 317-amino-acid chain: Transcription factor EC (317 aa).

Positions 1–90 (MTLDHRLFSQ…GLMNASCPSI (90 aa)) are necessary for transcriptional transactivation. Residues 110-163 (QKKDNHNLIERRRRYNINYRIKELGTLIPKSNDPDIRWNKGTILKASVDYIKWL) form the bHLH domain. Residues 242-317 (TSPEFYEQAV…SLSSEDGDEL (76 aa)) are necessary for transcriptional transactivation.

This sequence belongs to the MiT/TFE family. As to quaternary structure, homodimer. Forms heterodimers with TFE3. Forms heterodimers with MITF. Interacts with MITF. As to expression, expressed in kidney, spleen, lung, liver, testis and muscle.

The protein resides in the nucleus. In terms of biological role, transcriptional regulator that acts as a repressor or an activator. Acts as a transcriptional repressor on minimal promoter containing mu E3 enhancer sequence. Binds to mu E3 DNA sequence of the immunoglobulin heavy-chain gene enhancer. Acts as a transcriptional transactivator on the proximal promoter region of the tartrate-resistant acid phosphatase (TRAP) E-box containing promoter. Collaborates with MITF in target gene activation. Acts as a transcriptional repressor on minimal promoter containing mu E3 enhancer sequence. Binds to mu E3 DNA sequence of the immunoglobulin heavy-chain gene enhancer. Binds DNA in a homo- or heterodimeric form. The sequence is that of Transcription factor EC (Tfec) from Rattus norvegicus (Rat).